Reading from the N-terminus, the 112-residue chain is Large ribosomal subunit protein eL36y (112 aa).

The segment covering 79 to 88 (KLGTHKRAKR) has biased composition (basic residues). The disordered stretch occupies residues 79 to 112 (KLGTHKRAKRKREEMSSVLRKMRSGGGGATEKKK). Positions 102–112 (SGGGGATEKKK) are enriched in gly residues.

Belongs to the eukaryotic ribosomal protein eL36 family.

The polypeptide is Large ribosomal subunit protein eL36y (RPL36B) (Arabidopsis thaliana (Mouse-ear cress)).